Consider the following 752-residue polypeptide: Putative xanthine dehydrogenase molybdenum-binding subunit XdhA (752 aa).

Mo-molybdopterin contacts are provided by Gln206, Phe237, Arg350, and Ala516.

The protein belongs to the xanthine dehydrogenase family. In terms of assembly, heterotrimer of XdhA, XdhB and XdhC. Mo-molybdopterin serves as cofactor.

The enzyme catalyses xanthine + NAD(+) + H2O = urate + NADH + H(+). It catalyses the reaction hypoxanthine + NAD(+) + H2O = xanthine + NADH + H(+). The protein operates within purine metabolism; hypoxanthine degradation; urate from hypoxanthine: step 1/2. Its pathway is purine metabolism; hypoxanthine degradation; urate from hypoxanthine: step 2/2. Functionally, presumed to be a dehydrogenase, but possibly an oxidase. Participates in limited purine salvage (requires aspartate) but does not support aerobic growth on purines as the sole carbon source (purine catabolism). Deletion results in increased adenine sensitivity, suggesting that this protein contributes to the conversion of adenine to guanine nucleotides during purine salvage. The polypeptide is Putative xanthine dehydrogenase molybdenum-binding subunit XdhA (xdhA) (Escherichia coli (strain K12)).